The chain runs to 291 residues: 3-hydroxy-5-phosphonooxypentane-2,4-dione thiolase (291 aa).

K203 acts as the Schiff-base intermediate with substrate in catalysis.

Belongs to the DeoC/FbaB aldolase family. In terms of assembly, homodecamer.

The protein resides in the cytoplasm. The enzyme catalyses dihydroxyacetone phosphate + acetyl-CoA = 3-hydroxy-2,4-dioxopentyl phosphate + CoA. In terms of biological role, involved in the degradation of phospho-AI-2, thereby terminating induction of the lsr operon and closing the AI-2 signaling cycle. Catalyzes the transfer of an acetyl moiety from 3-hydroxy-5-phosphonooxypentane-2,4-dione to CoA to form glycerone phosphate and acetyl-CoA. The sequence is that of 3-hydroxy-5-phosphonooxypentane-2,4-dione thiolase from Escherichia coli (strain K12 / DH10B).